We begin with the raw amino-acid sequence, 557 residues long: MASLLANGISSFSPQPTSDSSKSPKGFHPKPESLKFPSPKSLNPTRPIFKLRADVGIDSRPIGASESSSSGTSTVSSTDKLQQYFQNLDYDKKYGFVEDIDSFTIPKGLSEETIRLISKLKEEPDWMLEFRFKAYAKFLKLEEPKWSDNRYPSINFQDMCYYSAPKKKPTLNSLDEVDPQLLEYFDKLGVPLTEQKRLANVAVDAVIDSVSIATTHRKTLEKSGVIFCSISEAIREYPDLIKKYLGRVVPSDDNYYAALNSAVFSDGSFCYIPKNTRCPMPISTYFRINAMETGQFERTLIVAEEGSFVEYLEGCTAPSYDTNQLHAAVVELYCGKGAEIKYSTVQNWYAGDEQGKGGIYNFVTKRGLCAGDRSKISWTQVETGSAITWKYPSVVLEGDDSVGEFYSVALTNNYQQADTGTKMIHKGKNTKSRIISKGISAGHSRNCYRGLVQVQSKAEGAKNTSTCDSMLIGDKAAANTYPYIQVKNPSAKVEHEASTSKIGEDQLFYFQQRGIDHERALAAMISGFCRDVFNKLPDEFGAEVNQLMSIKLEGSVG.

The interval 1 to 47 is disordered; sequence MASLLANGISSFSPQPTSDSSKSPKGFHPKPESLKFPSPKSLNPTRP. The N-terminal 52 residues, 1–52, are a transit peptide targeting the chloroplast; it reads MASLLANGISSFSPQPTSDSSKSPKGFHPKPESLKFPSPKSLNPTRPIFKLR. The span at 10 to 24 shows a compositional bias: low complexity; the sequence is SSFSPQPTSDSSKSP.

The protein belongs to the iron-sulfur cluster assembly SufBD family.

It is found in the plastid. It localises to the chloroplast. Its function is as follows. Involved in light signaling, probably by mediating the transport and correct distribution of protoporphyrin IX, a chlorophyll precursor, in response to far-red light. The protein is Iron-sulfur cluster assembly SufBD family protein ABCI8, chloroplastic (ABCI8) of Arabidopsis thaliana (Mouse-ear cress).